Reading from the N-terminus, the 491-residue chain is Lysine--tRNA ligase (491 aa).

Mg(2+)-binding residues include E399 and E406.

This sequence belongs to the class-II aminoacyl-tRNA synthetase family. Homodimer. Mg(2+) serves as cofactor.

The protein resides in the cytoplasm. The enzyme catalyses tRNA(Lys) + L-lysine + ATP = L-lysyl-tRNA(Lys) + AMP + diphosphate. This Chloroflexus aurantiacus (strain ATCC 29366 / DSM 635 / J-10-fl) protein is Lysine--tRNA ligase.